The primary structure comprises 102 residues: uncharacterized protein (102 aa).

A helical transmembrane segment spans residues 7–23; that stretch reads IVFVSCVILGLAACSSQ.

The protein localises to the membrane. This is an uncharacterized protein from Haemophilus influenzae (strain ATCC 51907 / DSM 11121 / KW20 / Rd).